The sequence spans 778 residues: Transcription factor kayak (778 aa).

Composition is skewed to low complexity over residues 24–54 (AQQLQHQQQQQQQQQQQTQLQQTPHAAHTQQ) and 77–98 (QYYQQQQQQQQQEQQMLRQRQL). 6 disordered regions span residues 24 to 57 (AQQLQHQQQQQQQQQQQTQLQQTPHAAHTQQNGL), 76 to 130 (NQYY…HQLR), 183 to 223 (QPTA…TTNG), 294 to 320 (APLVNNNNNNNGNGNGNGNGNGNVLAS), 356 to 414 (ASVM…GTGG), and 427 to 478 (RNTN…RKRR). Positions 99-108 (PTQQPAASYE) are enriched in polar residues. Low complexity-rich tracts occupy residues 109 to 130 (QQQQQPQQHQHLQQQQQQHQLR) and 183 to 222 (QPTAAVATTTPTQKATPTKTTPTNNPTTTTNNSTTTTTTN). Residues 382-402 (ISDTSSGATDSTSYQNGHMMG) are compositionally biased toward low complexity. Residues 403–414 (NSGGGNGGGTGG) are compositionally biased toward gly residues. A compositionally biased stretch (polar residues) spans 427–436 (RNTNTSNSAT). The bZIP domain occupies 457–520 (EEKRRIRRER…NQLEYFLQAH (64 aa)). A basic motif region spans residues 459 to 478 (KRRIRRERNKQAAARCRKRR). The leucine-zipper stretch occupies residues 485–513 (LTEEVELLEKRGENLKKEMELLNETKNQL). Residues 550–571 (GSCGSGSSHHNNNSNSNDSSSG) are compositionally biased toward low complexity. 2 disordered regions span residues 550–594 (GSCG…DLKP) and 756–778 (TSQNKHPLELPTPTTEPSKLVSL). A compositionally biased stretch (polar residues) spans 579-589 (TLNSTGRSNSP). Ser-588 is subject to Phosphoserine.

Belongs to the bZIP family. Fos subfamily. As to quaternary structure, homodimer. Heterodimer with Jra. The kay-Jra heterodimer binds more stably to the AP-1 site than either of the two proteins alone.

It localises to the nucleus. Developmentally regulated transcription factor AP-1 binds and recognizes the enhancer DNA sequence: 5'-TGA[CG]TCA-3'. May play a role in the function or determination of a particular subset of cells in the developing embryo. It is able to carry out its function either independently of or in conjunction with Jra. The sequence is that of Transcription factor kayak from Drosophila pseudoobscura pseudoobscura (Fruit fly).